The following is a 261-amino-acid chain: Glutamate 5-kinase (261 aa).

ATP is bound at residue lysine 7. Serine 46, aspartate 131, and asparagine 147 together coordinate substrate. ATP-binding positions include 167 to 168 (SD) and 209 to 215 (TGGIVTK).

Belongs to the glutamate 5-kinase family.

The protein resides in the cytoplasm. The enzyme catalyses L-glutamate + ATP = L-glutamyl 5-phosphate + ADP. It functions in the pathway amino-acid biosynthesis; L-proline biosynthesis; L-glutamate 5-semialdehyde from L-glutamate: step 1/2. Functionally, catalyzes the transfer of a phosphate group to glutamate to form L-glutamate 5-phosphate. In Wolinella succinogenes (strain ATCC 29543 / DSM 1740 / CCUG 13145 / JCM 31913 / LMG 7466 / NCTC 11488 / FDC 602W) (Vibrio succinogenes), this protein is Glutamate 5-kinase.